The sequence spans 594 residues: Elongation factor 4 (594 aa).

The region spanning 2-184 (KNIRNFSIIA…TIVAKVPAPE (183 aa)) is the tr-type G domain. GTP contacts are provided by residues 14–19 (DHGKST) and 131–134 (NKID).

This sequence belongs to the TRAFAC class translation factor GTPase superfamily. Classic translation factor GTPase family. LepA subfamily.

The protein localises to the cell inner membrane. The catalysed reaction is GTP + H2O = GDP + phosphate + H(+). In terms of biological role, required for accurate and efficient protein synthesis under certain stress conditions. May act as a fidelity factor of the translation reaction, by catalyzing a one-codon backward translocation of tRNAs on improperly translocated ribosomes. Back-translocation proceeds from a post-translocation (POST) complex to a pre-translocation (PRE) complex, thus giving elongation factor G a second chance to translocate the tRNAs correctly. Binds to ribosomes in a GTP-dependent manner. This chain is Elongation factor 4, found in Francisella tularensis subsp. tularensis (strain FSC 198).